The following is a 447-amino-acid chain: RNA-binding protein 208 (447 aa).

RRM domains follow at residues 73–147 (RSVY…WAYA) and 158–236 (FHIF…WATK). Polar residues predominate over residues 254-269 (TNGSSSNPGMEASQDT). Disordered stretches follow at residues 254–279 (TNGS…ENNP) and 353–372 (WGNK…PPLP). The RRM 3 domain maps to 282–356 (TTVYVGNLGH…KPIKCSWGNK (75 aa)).

Interacts with RBP-P.

Its function is as follows. RNA-binding protein. The sequence is that of RNA-binding protein 208 from Oryza sativa subsp. japonica (Rice).